A 199-amino-acid chain; its full sequence is Chromophore lyase CpcT/CpeT 2 (199 aa).

This sequence belongs to the CpcT/CpeT biliprotein lyase family.

Functionally, covalently attaches a chromophore to Cys residue(s) of phycobiliproteins. The sequence is that of Chromophore lyase CpcT/CpeT 2 from Synechococcus sp. (strain JA-3-3Ab) (Cyanobacteria bacterium Yellowstone A-Prime).